Reading from the N-terminus, the 235-residue chain is Ribonuclease P protein component 3 (235 aa).

The protein belongs to the eukaryotic/archaeal RNase P protein component 3 family. Consists of a catalytic RNA component and at least 4-5 protein subunits.

The protein localises to the cytoplasm. The enzyme catalyses Endonucleolytic cleavage of RNA, removing 5'-extranucleotides from tRNA precursor.. Its function is as follows. Part of ribonuclease P, a protein complex that generates mature tRNA molecules by cleaving their 5'-ends. The protein is Ribonuclease P protein component 3 of Haloarcula marismortui (strain ATCC 43049 / DSM 3752 / JCM 8966 / VKM B-1809) (Halobacterium marismortui).